We begin with the raw amino-acid sequence, 479 residues long: 6-phosphogluconate dehydrogenase, decarboxylating (479 aa).

Residues 9–14 (GLAVMG), 32–34 (NRT), 74–76 (IQA), and asparagine 102 each bind NADP(+). Substrate is bound by residues asparagine 102 and 128 to 130 (SGG). Lysine 182 acts as the Proton acceptor in catalysis. 185-186 (HN) provides a ligand contact to substrate. Glutamate 189 (proton donor) is an active-site residue. 5 residues coordinate substrate: tyrosine 190, lysine 259, arginine 286, arginine 446, and histidine 452.

The protein belongs to the 6-phosphogluconate dehydrogenase family. Homodimer.

The enzyme catalyses 6-phospho-D-gluconate + NADP(+) = D-ribulose 5-phosphate + CO2 + NADPH. It participates in carbohydrate degradation; pentose phosphate pathway; D-ribulose 5-phosphate from D-glucose 6-phosphate (oxidative stage): step 3/3. In terms of biological role, catalyzes the oxidative decarboxylation of 6-phosphogluconate to ribulose 5-phosphate and CO(2), with concomitant reduction of NADP to NADPH. The sequence is that of 6-phosphogluconate dehydrogenase, decarboxylating (gnd) from Chlamydia pneumoniae (Chlamydophila pneumoniae).